Consider the following 221-residue polypeptide: MNVFSQTQRYKALFWLSLFHLLVITSSNYLVQLPVSILGFHTTWGAFSFPFIFLATDLTVRIFGAPLARRIIFAVMIPALLISYVISSLFYMGSWQGFGALAHFNLFVARIATASFMAYALGQILDVHVFNRLRQSRRWWLAPTASTLFGNVSDTLAFFFIAFWRSPDAFMAEHWMEIALVDYCFKVLISIVFFLPMYGVLLNMLLKRLADKSEINALQAS.

The Cytoplasmic segment spans residues Met1–Ala12. Residues Leu13–Leu33 form a helical membrane-spanning segment. A topological domain (periplasmic) is located at residue Pro34. Residues Val35–Ala55 form a helical membrane-spanning segment. Topologically, residues Thr56–Arg70 are cytoplasmic. A helical transmembrane segment spans residues Ile71–Tyr91. Topologically, residues Met92 to Gly97 are periplasmic. A helical transmembrane segment spans residues Phe98–Ala118. The Cytoplasmic portion of the chain corresponds to Tyr119–Pro143. The helical transmembrane segment at Thr144–Trp164 threads the bilayer. The Periplasmic portion of the chain corresponds to Arg165–Cys184. A helical transmembrane segment spans residues Phe185–Leu205. The Cytoplasmic segment spans residues Leu206–Ser221.

This sequence belongs to the vitamin uptake transporter (VUT/ECF) (TC 2.A.88) family. Q precursor transporter subfamily.

The protein resides in the cell inner membrane. Its function is as follows. Involved in the import of queuosine (Q) precursors, required for Q precursor salvage. Transports 7-cyano-7-deazaguanine (preQ(0)) and 7-aminomethyl-7-deazaguanine (preQ(1)), with a preference for preQ(0). The polypeptide is Queuosine precursor transporter (yhhQ) (Escherichia coli (strain K12)).